Here is a 214-residue protein sequence, read N- to C-terminus: MIMRTDTNNILMRHLKNLTDDEFKCIIHRSSDFLYLSDRDYTSITKETLVSEIVEEYPDDCNKILAIIFLVLDKDIDVDIETKLTPTPKPAVRFAILDKMTADIKLTDLVRHYFRYIEQDIPLGPLFKKIDSYRIRAINNYSKELGLATEYFNKYGHLMFYTLPIPYNRFFCRNSIGFLAVLSPTIGYVKAFYKFIEYVSIDDRLKFKKELMSK.

It belongs to the orthopoxvirus OPG034 family.

In Monkeypox virus, this protein is Protein OPG034 (OPG034).